Reading from the N-terminus, the 176-residue chain is ATP-dependent protease subunit HslV (176 aa).

Threonine 4 is a catalytic residue. Na(+) is bound by residues alanine 159, cysteine 162, and threonine 165.

The protein belongs to the peptidase T1B family. HslV subfamily. A double ring-shaped homohexamer of HslV is capped on each side by a ring-shaped HslU homohexamer. The assembly of the HslU/HslV complex is dependent on binding of ATP.

It localises to the cytoplasm. It carries out the reaction ATP-dependent cleavage of peptide bonds with broad specificity.. Allosterically activated by HslU binding. Protease subunit of a proteasome-like degradation complex believed to be a general protein degrading machinery. The sequence is that of ATP-dependent protease subunit HslV from Wolbachia sp. subsp. Brugia malayi (strain TRS).